Consider the following 128-residue polypeptide: D-ribose pyranase (128 aa).

His-20 acts as the Proton donor in catalysis. Substrate-binding positions include Asp-28, His-95, and 117-119 (YSN).

The protein belongs to the RbsD / FucU family. RbsD subfamily. In terms of assembly, homodecamer.

The protein localises to the cytoplasm. It carries out the reaction beta-D-ribopyranose = beta-D-ribofuranose. The protein operates within carbohydrate metabolism; D-ribose degradation; D-ribose 5-phosphate from beta-D-ribopyranose: step 1/2. In terms of biological role, catalyzes the interconversion of beta-pyran and beta-furan forms of D-ribose. The sequence is that of D-ribose pyranase from Thermosipho africanus (strain TCF52B).